The chain runs to 157 residues: Transcription elongation factor GreB (157 aa).

The stretch at 52–73 (KKLLREIDRRVRYLRKRLEDMR) forms a coiled coil.

It belongs to the GreA/GreB family. GreB subfamily.

Its function is as follows. Necessary for efficient RNA polymerase transcription elongation past template-encoded arresting sites. The arresting sites in DNA have the property of trapping a certain fraction of elongating RNA polymerases that pass through, resulting in locked ternary complexes. Cleavage of the nascent transcript by cleavage factors such as GreA or GreB allows the resumption of elongation from the new 3'terminus. GreB releases sequences of up to 9 nucleotides in length. This is Transcription elongation factor GreB from Pseudomonas syringae pv. tomato (strain ATCC BAA-871 / DC3000).